Reading from the N-terminus, the 306-residue chain is Metal ABC transporter substrate-binding lipoprotein SloC (306 aa).

Positions 1–19 (MKKLSLLLLVCLSLLGLFA) are cleaved as a signal peptide. Cysteine 20 is lipidated: N-palmitoyl cysteine. A lipid anchor (S-diacylglycerol cysteine) is attached at cysteine 20. The a divalent metal cation site is built by histidine 64, histidine 136, glutamate 202, and aspartate 277.

This sequence belongs to the bacterial solute-binding protein 9 family. Lipoprotein receptor antigen (Lrai) subfamily.

The protein localises to the cell membrane. Part of the ATP-binding cassette (ABC) transport system SloABC involved in metal import. Binds a metal with high affinity and specificity and delivers it to the membrane permease for translocation into the cytoplasm. May act as an adhesin which is involved on adherence to extracellular matrix. It is an important factor in pathogenesis and infection. May contribute to the formation and accumulation of dental plaque. The sequence is that of Metal ABC transporter substrate-binding lipoprotein SloC (sloC) from Streptococcus mutans serotype c (strain ATCC 700610 / UA159).